We begin with the raw amino-acid sequence, 292 residues long: Nitrogenase iron protein (292 aa).

8–15 provides a ligand contact to ATP; that stretch reads GKGGIGKS. Cys-96 lines the [4Fe-4S] cluster pocket. At Arg-99 the chain carries ADP-ribosylarginine; by dinitrogenase reductase ADP-ribosyltransferase. Cys-130 contacts [4Fe-4S] cluster.

This sequence belongs to the NifH/BchL/ChlL family. As to quaternary structure, homodimer. The cofactor is [4Fe-4S] cluster. The reversible ADP-ribosylation of Arg-99 inactivates the nitrogenase reductase and regulates nitrogenase activity.

It carries out the reaction N2 + 8 reduced [2Fe-2S]-[ferredoxin] + 16 ATP + 16 H2O = H2 + 8 oxidized [2Fe-2S]-[ferredoxin] + 2 NH4(+) + 16 ADP + 16 phosphate + 6 H(+). The key enzymatic reactions in nitrogen fixation are catalyzed by the nitrogenase complex, which has 2 components: the iron protein and the molybdenum-iron protein. The sequence is that of Nitrogenase iron protein from Synechococcus sp. (strain JA-3-3Ab) (Cyanobacteria bacterium Yellowstone A-Prime).